A 940-amino-acid chain; its full sequence is Isoleucine--tRNA ligase (940 aa).

Positions proline 58–histidine 68 match the 'HIGH' region motif. Glutamate 564 provides a ligand contact to L-isoleucyl-5'-AMP. A 'KMSKS' region motif is present at residues lysine 605–serine 609. Lysine 608 contacts ATP. Zn(2+) is bound by residues cysteine 903, cysteine 906, cysteine 923, and cysteine 926.

Belongs to the class-I aminoacyl-tRNA synthetase family. IleS type 1 subfamily. As to quaternary structure, monomer. Zn(2+) is required as a cofactor.

It is found in the cytoplasm. The catalysed reaction is tRNA(Ile) + L-isoleucine + ATP = L-isoleucyl-tRNA(Ile) + AMP + diphosphate. In terms of biological role, catalyzes the attachment of isoleucine to tRNA(Ile). As IleRS can inadvertently accommodate and process structurally similar amino acids such as valine, to avoid such errors it has two additional distinct tRNA(Ile)-dependent editing activities. One activity is designated as 'pretransfer' editing and involves the hydrolysis of activated Val-AMP. The other activity is designated 'posttransfer' editing and involves deacylation of mischarged Val-tRNA(Ile). This chain is Isoleucine--tRNA ligase, found in Shewanella woodyi (strain ATCC 51908 / MS32).